Consider the following 346-residue polypeptide: UDP-3-O-acylglucosamine N-acyltransferase (346 aa).

His-253 (proton acceptor) is an active-site residue.

Belongs to the transferase hexapeptide repeat family. LpxD subfamily. Homotrimer.

It catalyses the reaction a UDP-3-O-[(3R)-3-hydroxyacyl]-alpha-D-glucosamine + a (3R)-hydroxyacyl-[ACP] = a UDP-2-N,3-O-bis[(3R)-3-hydroxyacyl]-alpha-D-glucosamine + holo-[ACP] + H(+). The protein operates within bacterial outer membrane biogenesis; LPS lipid A biosynthesis. Catalyzes the N-acylation of UDP-3-O-acylglucosamine using 3-hydroxyacyl-ACP as the acyl donor. Is involved in the biosynthesis of lipid A, a phosphorylated glycolipid that anchors the lipopolysaccharide to the outer membrane of the cell. The protein is UDP-3-O-acylglucosamine N-acyltransferase of Rickettsia typhi (strain ATCC VR-144 / Wilmington).